The sequence spans 274 residues: Thiamine kinase (274 aa).

It belongs to the thiamine kinase family.

The enzyme catalyses thiamine + ATP = thiamine phosphate + ADP + H(+). It functions in the pathway cofactor biosynthesis; thiamine diphosphate biosynthesis; thiamine phosphate from thiamine: step 1/1. Its function is as follows. Catalyzes the ATP-dependent phosphorylation of thiamine to thiamine phosphate. Is involved in thiamine salvage. This is Thiamine kinase from Shigella flexneri serotype 5b (strain 8401).